An 82-amino-acid polypeptide reads, in one-letter code: Putative membrane protein insertion efficiency factor (82 aa).

It belongs to the UPF0161 family.

The protein resides in the cell inner membrane. Its function is as follows. Could be involved in insertion of integral membrane proteins into the membrane. This chain is Putative membrane protein insertion efficiency factor, found in Rickettsia felis (strain ATCC VR-1525 / URRWXCal2) (Rickettsia azadi).